Consider the following 571-residue polypeptide: Proline--tRNA ligase (571 aa).

It belongs to the class-II aminoacyl-tRNA synthetase family. ProS type 1 subfamily. In terms of assembly, homodimer.

Its subcellular location is the cytoplasm. It catalyses the reaction tRNA(Pro) + L-proline + ATP = L-prolyl-tRNA(Pro) + AMP + diphosphate. Its function is as follows. Catalyzes the attachment of proline to tRNA(Pro) in a two-step reaction: proline is first activated by ATP to form Pro-AMP and then transferred to the acceptor end of tRNA(Pro). As ProRS can inadvertently accommodate and process non-cognate amino acids such as alanine and cysteine, to avoid such errors it has two additional distinct editing activities against alanine. One activity is designated as 'pretransfer' editing and involves the tRNA(Pro)-independent hydrolysis of activated Ala-AMP. The other activity is designated 'posttransfer' editing and involves deacylation of mischarged Ala-tRNA(Pro). The misacylated Cys-tRNA(Pro) is not edited by ProRS. The sequence is that of Proline--tRNA ligase from Pseudomonas aeruginosa (strain LESB58).